A 284-amino-acid polypeptide reads, in one-letter code: Formamidopyrimidine-DNA glycosylase (284 aa).

P2 functions as the Schiff-base intermediate with DNA in the catalytic mechanism. The active-site Proton donor is the E3. The active-site Proton donor; for beta-elimination activity is K61. DNA is bound by residues H95, R115, and R157. Residues 243 to 277 (AVYGRAGQPCRRCGTAIVREPFMNRSSFRCPACQP) form an FPG-type zinc finger. The active-site Proton donor; for delta-elimination activity is the R267.

It belongs to the FPG family. In terms of assembly, monomer. Requires Zn(2+) as cofactor.

The catalysed reaction is Hydrolysis of DNA containing ring-opened 7-methylguanine residues, releasing 2,6-diamino-4-hydroxy-5-(N-methyl)formamidopyrimidine.. It catalyses the reaction 2'-deoxyribonucleotide-(2'-deoxyribose 5'-phosphate)-2'-deoxyribonucleotide-DNA = a 3'-end 2'-deoxyribonucleotide-(2,3-dehydro-2,3-deoxyribose 5'-phosphate)-DNA + a 5'-end 5'-phospho-2'-deoxyribonucleoside-DNA + H(+). In terms of biological role, involved in base excision repair of DNA damaged by oxidation or by mutagenic agents. Acts as a DNA glycosylase that recognizes and removes damaged bases. Has a preference for oxidized purines, such as 7,8-dihydro-8-oxoguanine (8-oxoG). Has AP (apurinic/apyrimidinic) lyase activity and introduces nicks in the DNA strand. Cleaves the DNA backbone by beta-delta elimination to generate a single-strand break at the site of the removed base with both 3'- and 5'-phosphates. The sequence is that of Formamidopyrimidine-DNA glycosylase from Acidothermus cellulolyticus (strain ATCC 43068 / DSM 8971 / 11B).